The chain runs to 216 residues: Uracil phosphoribosyltransferase (216 aa).

5-phospho-alpha-D-ribose 1-diphosphate-binding positions include Arg-85, Arg-110, and 135–143 (DPMVATGYS). Uracil-binding positions include Ile-200 and 205 to 207 (GDA). A 5-phospho-alpha-D-ribose 1-diphosphate-binding site is contributed by Asp-206.

Belongs to the UPRTase family. Mg(2+) serves as cofactor.

The enzyme catalyses UMP + diphosphate = 5-phospho-alpha-D-ribose 1-diphosphate + uracil. The protein operates within pyrimidine metabolism; UMP biosynthesis via salvage pathway; UMP from uracil: step 1/1. With respect to regulation, allosterically activated by GTP. Functionally, catalyzes the conversion of uracil and 5-phospho-alpha-D-ribose 1-diphosphate (PRPP) to UMP and diphosphate. This Burkholderia mallei (strain NCTC 10247) protein is Uracil phosphoribosyltransferase.